The primary structure comprises 747 residues: Elongation factor G, mitochondrial (747 aa).

A mitochondrion-targeting transit peptide spans 1–32 (MTLITRVLNGNLPLRLSTLKAARQLQCGYSSH). In terms of domain architecture, tr-type G spans 42–319 (ERIRNIGISA…AVVDYLPNPG (278 aa)). GTP is bound by residues 51–58 (AHIDSGKT), 118–122 (DTPGH), and 172–175 (NKLD).

It belongs to the TRAFAC class translation factor GTPase superfamily. Classic translation factor GTPase family. EF-G/EF-2 subfamily.

Its subcellular location is the mitochondrion. Its pathway is protein biosynthesis; polypeptide chain elongation. In terms of biological role, mitochondrial GTPase that catalyzes the GTP-dependent ribosomal translocation step during translation elongation. During this step, the ribosome changes from the pre-translocational (PRE) to the post-translocational (POST) state as the newly formed A-site-bound peptidyl-tRNA and P-site-bound deacylated tRNA move to the P and E sites, respectively. Catalyzes the coordinated movement of the two tRNA molecules, the mRNA and conformational changes in the ribosome. Essential during development as it acts as a retrograde signal from mitochondria to the nucleus to slow down cell proliferation if mitochondrial energy output is low. The polypeptide is Elongation factor G, mitochondrial (Drosophila mojavensis (Fruit fly)).